The chain runs to 193 residues: Ribonuclease HII (193 aa).

In terms of domain architecture, RNase H type-2 spans 15-193 (YIVAGIDEAG…PYHRKSFKCC (179 aa)). A divalent metal cation is bound by residues Asp21, Glu22, and Asp112.

It belongs to the RNase HII family. The cofactor is Mn(2+). Mg(2+) is required as a cofactor.

The protein resides in the cytoplasm. It carries out the reaction Endonucleolytic cleavage to 5'-phosphomonoester.. In terms of biological role, endonuclease that specifically degrades the RNA of RNA-DNA hybrids. The sequence is that of Ribonuclease HII from Rickettsia akari (strain Hartford).